A 104-amino-acid chain; its full sequence is MEKYAFKMQLTPGCLAEYRKRHDEIWPELVDLLHQAGVSDYSIHLDEETGILFGVLWRTADHSMDALPDHPVMQRWWAHMADIMETHPDNEPKAVPLTPVFHMP.

Substrate is bound at residue tyrosine 18. Histidine 22 (proton donor) is an active-site residue. Residues tyrosine 41 and 76-77 (WW) contribute to the substrate site.

Belongs to the rhamnose mutarotase family. As to quaternary structure, homodimer.

The protein resides in the cytoplasm. The enzyme catalyses alpha-L-rhamnose = beta-L-rhamnose. It functions in the pathway carbohydrate metabolism; L-rhamnose metabolism. Functionally, involved in the anomeric conversion of L-rhamnose. In Jannaschia sp. (strain CCS1), this protein is L-rhamnose mutarotase.